Reading from the N-terminus, the 120-residue chain is Large ribosomal subunit protein uL18 (120 aa).

It belongs to the universal ribosomal protein uL18 family. As to quaternary structure, part of the 50S ribosomal subunit; part of the 5S rRNA/L5/L18/L25 subcomplex. Contacts the 5S and 23S rRNAs.

Its function is as follows. This is one of the proteins that bind and probably mediate the attachment of the 5S RNA into the large ribosomal subunit, where it forms part of the central protuberance. This is Large ribosomal subunit protein uL18 from Staphylococcus saprophyticus subsp. saprophyticus (strain ATCC 15305 / DSM 20229 / NCIMB 8711 / NCTC 7292 / S-41).